The primary structure comprises 605 residues: Protein spinster (605 aa).

A disordered region spans residues 1–94 (MSLKHQKQSY…HPLGEHHHIP (94 aa)). Residues 27–38 (SSGSSGSSSSEE) show a composition bias toward low complexity. Over residues 55–67 (TTYSSQQLMPSDT) the composition is skewed to polar residues. Basic residues predominate over residues 76 to 85 (RLRPHHHHHH). The chain crosses the membrane as a helical span at residues 115–137 (FTVTVLCFVNLINYMDRFTIAGV). Asparagine 149 is a glycosylation site (N-linked (GlcNAc...) asparagine). Transmembrane regions (helical) follow at residues 153-173 (GLLQ…FGYL), 180-200 (PWIM…GSFM), 203-223 (FGWF…YSTI), 240-260 (MLAL…IVGS), and 271-291 (WALR…LLIK). An N-linked (GlcNAc...) asparagine glycan is attached at asparagine 319. The next 5 helical transmembrane spans lie at 329-349 (FTCV…FIYL), 367-387 (FNFG…GSFL), 401-421 (VICA…CLLV), 431-451 (LIFF…DILL), and 465-485 (FQIL…VGAI). Asparagine 519 carries N-linked (GlcNAc...) asparagine glycosylation. The helical transmembrane segment at 558–578 (STSFVEVLGGIFFIFTACFII) threads the bilayer. Asparagine 583 is a glycosylation site (N-linked (GlcNAc...) asparagine).

The protein belongs to the major facilitator superfamily. Spinster (TC 2.A.1.49) family. As to expression, enriched in brain (at protein level).

It is found in the late endosome membrane. The protein localises to the lysosome membrane. In terms of biological role, probable sphingolipid transporter that plays a central role in endosomes and/or lysosomes storage. Involved in TGF-beta-mediated synaptic growth regulation both pre- and postsynaptically via its function in endosomal storage regulation. Also required during oogenesis by regulating yolk spheres storage. The sequence is that of Protein spinster (spin) from Drosophila melanogaster (Fruit fly).